Consider the following 693-residue polypeptide: MAREFSLKNTRNIGIMAHIDAGKTTTTERILYYTGRIHKIGETHEGASQMDWMEQEQERGITITSAATTAQWNGHRINIIDTPGHVDFTVEVERSLRVLDGAVTVLDAQSGVEPQTETVWRQATTYGVPRIVFINKMDKTGADFNYSVGTLHDRLQANAHPIQMPIGAEDQFNAIVDLVEMKLYTYTNDLGTDIEVTEVPEEHLADAEAMREQLIEAVADVNEDLMEKYLGGEEISVDELKAAIRQATCDVEFYPVLAGTAFKNKGVQLMLDAAIEYLPSPLDVKPIIGHAADDENEEIIAKPDDSAPFAALAFKVMTDPFVGKLTFFRVYSGTLNSGSYVQNATKGKRERVGRILQMHANSREEISTVYSGDIAAAVGLKDTTTGDTLCDEKNQVILESMEFPEPVIHLSVEPKSKADQDKMTNALVKLQEEDPTFHAHTDPETGQVIIGGMGELHLDILVDRMKREFKVEATVGAPMVSYRETFKKAAAVQGKFSRQSGGRGQYGDVHIEFSPNEVGGGFEFENAIVGGVIPREYIPSVEAGLRDAMENGVLAGYPLIDVKAKLFDGSYHDVDSSEMAFKVAASLALKEAAKKCDPVILEPMMKVEIVMPEEYMGDIMGDVTSRRGRVEGMEARGNAQVVRAFVPLAEMFGYATNLRSNTQGRGTYSMVFDHYEEVPKSIAEDIIKKNKGE.

The tr-type G domain maps to 8–282 (KNTRNIGIMA…AAIEYLPSPL (275 aa)). Residues 17–24 (AHIDAGKT), 81–85 (DTPGH), and 135–138 (NKMD) each bind GTP.

It belongs to the TRAFAC class translation factor GTPase superfamily. Classic translation factor GTPase family. EF-G/EF-2 subfamily.

Its subcellular location is the cytoplasm. In terms of biological role, catalyzes the GTP-dependent ribosomal translocation step during translation elongation. During this step, the ribosome changes from the pre-translocational (PRE) to the post-translocational (POST) state as the newly formed A-site-bound peptidyl-tRNA and P-site-bound deacylated tRNA move to the P and E sites, respectively. Catalyzes the coordinated movement of the two tRNA molecules, the mRNA and conformational changes in the ribosome. This Macrococcus caseolyticus (strain JCSC5402) (Macrococcoides caseolyticum) protein is Elongation factor G.